Here is a 311-residue protein sequence, read N- to C-terminus: Ribosomal RNA small subunit methyltransferase H (311 aa).

S-adenosyl-L-methionine is bound by residues 32-34 (AGH), Asp52, Phe79, Asp100, and Gln107.

Belongs to the methyltransferase superfamily. RsmH family.

The protein localises to the cytoplasm. The enzyme catalyses cytidine(1402) in 16S rRNA + S-adenosyl-L-methionine = N(4)-methylcytidine(1402) in 16S rRNA + S-adenosyl-L-homocysteine + H(+). Specifically methylates the N4 position of cytidine in position 1402 (C1402) of 16S rRNA. In Staphylococcus aureus (strain Mu3 / ATCC 700698), this protein is Ribosomal RNA small subunit methyltransferase H.